A 113-amino-acid chain; its full sequence is Ribulose bisphosphate carboxylase small subunit (113 aa).

The protein belongs to the RuBisCO small chain family. In terms of assembly, heterohexadecamer of 8 large and 8 small subunits. Forms a CsoS2-CsoS1-RuBisCO complex.

It localises to the carboxysome. Functionally, ruBisCO catalyzes two reactions: the carboxylation of D-ribulose 1,5-bisphosphate, the primary event in carbon dioxide fixation, as well as the oxidative fragmentation of the pentose substrate in the photorespiration process. Both reactions occur simultaneously and in competition at the same active site. Although the small subunit is not catalytic it is essential for maximal activity. There are estimated to be 152 RuBisCO holoenzymes per carboxysome. This is Ribulose bisphosphate carboxylase small subunit from Prochlorococcus marinus subsp. pastoris (strain CCMP1986 / NIES-2087 / MED4).